The sequence spans 459 residues: Serine/threonine-protein kinase 12 (459 aa).

A disordered region spans residues 1–30; the sequence is MEEDYQQPRFTIGRQSSMAPEKIPEPSVHS. 3 ANK repeats span residues 42–71, 75–104, and 108–137; these read DGGV…DANY, DDRT…EVDP, and WGST…KHPM. Residues 102–417 enclose the Protein kinase domain; it reads VDPKDRWGST…EIIKRLESIL (316 aa). Residues 108 to 116 and lysine 184 each bind ATP; that span reads WGSTPFADA. Aspartate 281 functions as the Proton acceptor in the catalytic mechanism.

Belongs to the protein kinase superfamily. Ser/Thr protein kinase family. As to quaternary structure, interacts with BLUS1, PHOT1 and PHOT2. In terms of tissue distribution, accumulates in leaves, stems, petioles and roots, especially in guard cells.

It is found in the cytoplasm. The protein resides in the cytosol. The catalysed reaction is L-seryl-[protein] + ATP = O-phospho-L-seryl-[protein] + ADP + H(+). It carries out the reaction L-threonyl-[protein] + ATP = O-phospho-L-threonyl-[protein] + ADP + H(+). Functionally, serine/threonine protein kinase that phosphorylates proteins on serine and threonine residues. Mediates blue light-dependent stomatal opening in guard cells by promoting plasma membrane-type ATPases (AHA1 and AHA2) phosphorylation. In Arabidopsis thaliana (Mouse-ear cress), this protein is Serine/threonine-protein kinase 12.